A 262-amino-acid polypeptide reads, in one-letter code: uncharacterized protein (262 aa).

It belongs to the BtpA family.

This is an uncharacterized protein from Pyrococcus furiosus (strain ATCC 43587 / DSM 3638 / JCM 8422 / Vc1).